We begin with the raw amino-acid sequence, 21 residues long: Peptide PGLa-R2 (21 aa).

Leu-21 is subject to Leucine amide.

Expressed by the skin glands.

The protein resides in the secreted. Antimicrobial peptide. This Xenopus ruwenzoriensis (Uganda clawed frog) protein is Peptide PGLa-R2.